Here is a 162-residue protein sequence, read N- to C-terminus: Caveolin-2 (162 aa).

Topologically, residues 1–86 are cytoplasmic; that stretch reads MGLESEKADV…FEISKYVLYK (86 aa). Residue Tyr-19 is modified to Phosphotyrosine. Phosphoserine occurs at positions 20, 23, and 36. Positions 87-107 form an intramembrane region, helical; the sequence is FLTFFLAIPLAFAAGILFAIL. The Cytoplasmic segment spans residues 108-162; that stretch reads SCLHIWIIMPFVKTCLMVLPSVQTIWKSVTDVVIAPLCTSVGRSFSSVSLQLSQD.

This sequence belongs to the caveolin family. In terms of assembly, monomer or homodimer. Interacts with CAV1; the interaction forms a stable heterooligomeric complex that is required for targeting to lipid rafts and for caveolae formation. Tyrosine phosphorylated forms do not form heterooligomers with the Tyr-19-phosphorylated form existing as a monomer or dimer. Interacts (tyrosine phosphorylated form) with the SH2 domain-containing proteins, RASA1, NCK1 and SRC. Interacts (tyrosine phosphorylated form) with INSR. Interacts (Tyr-19 phosphorylated form) with MAPK1 (phosphorylated form); the interaction, promoted by insulin, leads to nuclear location and MAPK1 activation. Interacts with STAT3; the interaction is increased on insulin-induced tyrosine phosphorylation leading to STAT activation. Post-translationally, phosphorylated on serine and tyrosine residues. CAV1 promotes phosphorylation on Ser-23 which then targets the complex to the plasma membrane, lipid rafts and caveolae. Phosphorylation on Ser-36 appears to modulate mitosis in endothelial cells. Phosphorylation on Tyr-19 is required for insulin-induced phosphorylation of MAPK1 and DNA binding of STAT3. Tyrosine phosphorylation is induced by both EGF and insulin.

It localises to the nucleus. The protein resides in the golgi apparatus membrane. Its subcellular location is the cell membrane. The protein localises to the membrane. It is found in the caveola. Its function is as follows. May act as a scaffolding protein within caveolar membranes. Interacts directly with G-protein alpha subunits and can functionally regulate their activity. Acts as an accessory protein in conjunction with CAV1 in targeting to lipid rafts and driving caveolae formation. The Ser-36 phosphorylated form has a role in modulating mitosis in endothelial cells. Positive regulator of cellular mitogenesis of the MAPK signaling pathway. Required for the insulin-stimulated nuclear translocation and activation of MAPK1 and STAT3, and the subsequent regulation of cell cycle progression. In Echinops telfairi (Lesser hedgehog tenrec), this protein is Caveolin-2 (CAV2).